The following is a 390-amino-acid chain: Digeranylgeranylglycerophospholipid reductase (390 aa).

Ala18, Glu37, Cys48, Ala49, Ala51, Arg98, Val122, Asp278, Gly290, and Ile291 together coordinate FAD. Val368 serves as a coordination point for a 2,3-bis-O-(geranylgeranyl)-sn-glycerol 1-phospholipid.

The protein belongs to the geranylgeranyl reductase family. DGGGPL reductase subfamily. It depends on FAD as a cofactor.

The enzyme catalyses a 2,3-bis-O-phytanyl-sn-glycerol 1-phospholipid + 8 A = a 2,3-bis-O-(geranylgeranyl)-sn-glycerol 1-phospholipid + 8 AH2. It catalyses the reaction 2,3-bis-O-(phytanyl)-sn-glycerol 1-phosphate + 8 A = 2,3-bis-O-(geranylgeranyl)-sn-glycerol 1-phosphate + 8 AH2. It carries out the reaction CDP-2,3-bis-O-(geranylgeranyl)-sn-glycerol + 8 AH2 = CDP-2,3-bis-O-(phytanyl)-sn-glycerol + 8 A. The catalysed reaction is archaetidylserine + 8 AH2 = 2,3-bis-O-phytanyl-sn-glycero-3-phospho-L-serine + 8 A. The protein operates within membrane lipid metabolism; glycerophospholipid metabolism. Functionally, is involved in the reduction of 2,3-digeranylgeranylglycerophospholipids (unsaturated archaeols) into 2,3-diphytanylglycerophospholipids (saturated archaeols) in the biosynthesis of archaeal membrane lipids. Catalyzes the formation of archaetidic acid (2,3-di-O-phytanyl-sn-glyceryl phosphate) from 2,3-di-O-geranylgeranylglyceryl phosphate (DGGGP) via the hydrogenation of each double bond of the isoprenoid chains. Is also probably able to reduce double bonds of geranyl groups in CDP-2,3-bis-O-(geranylgeranyl)-sn-glycerol and archaetidylserine, thus acting at various stages in the biosynthesis of archaeal membrane lipids. The sequence is that of Digeranylgeranylglycerophospholipid reductase from Methanococcus maripaludis (strain C7 / ATCC BAA-1331).